A 245-amino-acid chain; its full sequence is 4-hydroxy-tetrahydrodipicolinate reductase (245 aa).

NAD(+) contacts are provided by residues 7–12, D33, 75–77, and 102–105; these read GAKGKV, GTT, and APNF. H132 serves as the catalytic Proton donor/acceptor. (S)-2,3,4,5-tetrahydrodipicolinate is bound at residue H133. K136 serves as the catalytic Proton donor. 142 to 143 serves as a coordination point for (S)-2,3,4,5-tetrahydrodipicolinate; it reads GT.

The protein belongs to the DapB family.

The protein resides in the cytoplasm. It carries out the reaction (S)-2,3,4,5-tetrahydrodipicolinate + NAD(+) + H2O = (2S,4S)-4-hydroxy-2,3,4,5-tetrahydrodipicolinate + NADH + H(+). It catalyses the reaction (S)-2,3,4,5-tetrahydrodipicolinate + NADP(+) + H2O = (2S,4S)-4-hydroxy-2,3,4,5-tetrahydrodipicolinate + NADPH + H(+). The protein operates within amino-acid biosynthesis; L-lysine biosynthesis via DAP pathway; (S)-tetrahydrodipicolinate from L-aspartate: step 4/4. Catalyzes the conversion of 4-hydroxy-tetrahydrodipicolinate (HTPA) to tetrahydrodipicolinate. This is 4-hydroxy-tetrahydrodipicolinate reductase from Mycolicibacterium paratuberculosis (strain ATCC BAA-968 / K-10) (Mycobacterium paratuberculosis).